The primary structure comprises 404 residues: Cysteine desulfurase IscS (404 aa).

Pyridoxal 5'-phosphate contacts are provided by residues 75 to 76 (AT), Asn155, Gln183, and 203 to 205 (SAH). Lys206 is modified (N6-(pyridoxal phosphate)lysine). Pyridoxal 5'-phosphate is bound at residue Thr243. Cys328 serves as the catalytic Cysteine persulfide intermediate. Cys328 lines the [2Fe-2S] cluster pocket.

This sequence belongs to the class-V pyridoxal-phosphate-dependent aminotransferase family. NifS/IscS subfamily. Homodimer. Forms a heterotetramer with IscU, interacts with other sulfur acceptors. Pyridoxal 5'-phosphate serves as cofactor.

Its subcellular location is the cytoplasm. It catalyses the reaction (sulfur carrier)-H + L-cysteine = (sulfur carrier)-SH + L-alanine. The protein operates within cofactor biosynthesis; iron-sulfur cluster biosynthesis. In terms of biological role, master enzyme that delivers sulfur to a number of partners involved in Fe-S cluster assembly, tRNA modification or cofactor biosynthesis. Catalyzes the removal of elemental sulfur atoms from cysteine to produce alanine. Functions as a sulfur delivery protein for Fe-S cluster synthesis onto IscU, an Fe-S scaffold assembly protein, as well as other S acceptor proteins. This is Cysteine desulfurase IscS from Vesicomyosocius okutanii subsp. Calyptogena okutanii (strain HA).